Reading from the N-terminus, the 62-residue chain is Large ribosomal subunit protein uL30 (62 aa).

It belongs to the universal ribosomal protein uL30 family. In terms of assembly, part of the 50S ribosomal subunit.

This chain is Large ribosomal subunit protein uL30, found in Cereibacter sphaeroides (strain ATCC 17029 / ATH 2.4.9) (Rhodobacter sphaeroides).